The following is a 483-amino-acid chain: Altronate oxidoreductase (483 aa).

18-29 (IIQFGEGNFLRA) lines the NAD(+) pocket.

The protein belongs to the mannitol dehydrogenase family. UxaB subfamily.

It carries out the reaction D-altronate + NAD(+) = keto-D-tagaturonate + NADH + H(+). It functions in the pathway carbohydrate metabolism; pentose and glucuronate interconversion. The sequence is that of Altronate oxidoreductase from Enterobacter sp. (strain 638).